A 253-amino-acid chain; its full sequence is AA9 family lytic polysaccharide monooxygenase F (253 aa).

Residues 1-16 (MKVLATLLASVGLVAA) form the signal peptide. Residue His-17 coordinates Cu(2+). Residue Asn-22 is glycosylated (N-linked (GlcNAc...) asparagine). 2 cysteine pairs are disulfide-bonded: Cys-75–Cys-193 and Cys-163–Cys-253. A Cu(2+)-binding site is contributed by His-105. The N-linked (GlcNAc...) asparagine glycan is linked to Asn-143. O2-binding residues include His-179 and Gln-188. Tyr-190 serves as a coordination point for Cu(2+).

The protein belongs to the polysaccharide monooxygenase AA9 family. Requires Cu(2+) as cofactor.

It localises to the secreted. It carries out the reaction [(1-&gt;4)-beta-D-glucosyl]n+m + reduced acceptor + O2 = 4-dehydro-beta-D-glucosyl-[(1-&gt;4)-beta-D-glucosyl]n-1 + [(1-&gt;4)-beta-D-glucosyl]m + acceptor + H2O.. Its function is as follows. Lytic polysaccharide monooxygenase (LPMO) that depolymerizes crystalline and amorphous polysaccharides via the oxidation of scissile alpha- or beta-(1-4)-glycosidic bonds, yielding C1 or C4 oxidation products. Catalysis by LPMOs requires the reduction of the active-site copper from Cu(II) to Cu(I) by a reducing agent and H(2)O(2) or O(2) as a cosubstrate. This Podospora anserina (strain S / ATCC MYA-4624 / DSM 980 / FGSC 10383) (Pleurage anserina) protein is AA9 family lytic polysaccharide monooxygenase F.